Reading from the N-terminus, the 132-residue chain is Large-conductance mechanosensitive channel (132 aa).

2 helical membrane-spanning segments follow: residues 11 to 31 (FISR…GAFG) and 75 to 95 (GSFL…FLLV).

This sequence belongs to the MscL family. As to quaternary structure, homopentamer.

The protein localises to the cell inner membrane. Channel that opens in response to stretch forces in the membrane lipid bilayer. May participate in the regulation of osmotic pressure changes within the cell. The chain is Large-conductance mechanosensitive channel from Synechococcus sp. (strain JA-2-3B'a(2-13)) (Cyanobacteria bacterium Yellowstone B-Prime).